A 212-amino-acid polypeptide reads, in one-letter code: ATP-dependent Clp protease proteolytic subunit (212 aa).

Ser-107 acts as the Nucleophile in catalysis. Residue His-132 is part of the active site.

It belongs to the peptidase S14 family. In terms of assembly, fourteen ClpP subunits assemble into 2 heptameric rings which stack back to back to give a disk-like structure with a central cavity, resembling the structure of eukaryotic proteasomes.

The protein resides in the cytoplasm. The enzyme catalyses Hydrolysis of proteins to small peptides in the presence of ATP and magnesium. alpha-casein is the usual test substrate. In the absence of ATP, only oligopeptides shorter than five residues are hydrolyzed (such as succinyl-Leu-Tyr-|-NHMec, and Leu-Tyr-Leu-|-Tyr-Trp, in which cleavage of the -Tyr-|-Leu- and -Tyr-|-Trp bonds also occurs).. In terms of biological role, cleaves peptides in various proteins in a process that requires ATP hydrolysis. Has a chymotrypsin-like activity. Plays a major role in the degradation of misfolded proteins. In Pseudoalteromonas atlantica (strain T6c / ATCC BAA-1087), this protein is ATP-dependent Clp protease proteolytic subunit.